A 253-amino-acid polypeptide reads, in one-letter code: Glutamate racemase (253 aa).

Substrate is bound by residues 7 to 8 (DS) and 39 to 40 (YG). Cysteine 70 functions as the Proton donor/acceptor in the catalytic mechanism. 71 to 72 (NT) lines the substrate pocket. The active-site Proton donor/acceptor is the cysteine 180. 181-182 (TH) is a binding site for substrate.

It belongs to the aspartate/glutamate racemases family.

It carries out the reaction L-glutamate = D-glutamate. The protein operates within cell wall biogenesis; peptidoglycan biosynthesis. In terms of biological role, provides the (R)-glutamate required for cell wall biosynthesis. In Halothermothrix orenii (strain H 168 / OCM 544 / DSM 9562), this protein is Glutamate racemase.